Reading from the N-terminus, the 406-residue chain is MMKSLASAVGGKTARACDSCVKRRARWYCAADDAFLCHACDGSVHSANPLARRHERVRLKSASAGKYRHASPPHQATWHQGFTRKARTPRGGKKSHTMVFHDLVPEMSTEDQAESYEVEEQLIFEVPVMNSMVEEQCFNQSLEKQNEFPMMPLSFKSSDEEDDDNAESCLNGLFPTDMELAQFTADVETLLGGGDREFHSIEELGLGEMLKIEKEEVEEEGVVTREVHDQDEGDETSPFEISFDYEYTHKTTFDEGEEDEKEDVMKNVMEMGVNEMSGGIKEEKKEKALMLRLDYESVISTWGGQGIPWTARVPSEIDLDMVCFPTHTMGESGAEAHHHNHFRGLGLHLGDAGDGGREARVSRYREKRRTRLFSKKIRYEVRKLNAEKRPRMKGRFVKRSSIGVAH.

Zn(2+) is bound by residues C17, C20, C40, and H45. A B box-type; atypical zinc finger spans residues 17-59 (CDSCVKRRARWYCAADDAFLCHACDGSVHSANPLARRHERVRL). The interval 63-95 (SAGKYRHASPPHQATWHQGFTRKARTPRGGKKS) is disordered. Positions 82–95 (FTRKARTPRGGKKS) are enriched in basic residues. The region spanning 357–399 (REARVSRYREKRRTRLFSKKIRYEVRKLNAEKRPRMKGRFVKR) is the CCT domain.

It belongs to the CONSTANS family.

The protein resides in the nucleus. This is Zinc finger protein CONSTANS-LIKE 6 (COL6) from Arabidopsis thaliana (Mouse-ear cress).